We begin with the raw amino-acid sequence, 242 residues long: DNA repair protein RecO (242 aa).

This sequence belongs to the RecO family. In terms of assembly, monomer.

In terms of biological role, involved in DNA repair and RecF pathway recombination. This chain is DNA repair protein RecO, found in Shigella sonnei (strain Ss046).